The sequence spans 515 residues: Organic cation/carnitine transporter 5 (515 aa).

The Cytoplasmic portion of the chain corresponds to 1 to 43; it reads MADSLAPLLPTHIEEDEDTSSPLTFDKILEKSLSDFGFSQFLQ. Residues 44–64 traverse the membrane as a helical segment; sequence IVLVGLALTFDSQQIFITVFT. Residues 65 to 124 lie on the Extracellular side of the membrane; that stretch reads DAYPTWHCLDHTICNPATTDICKIPRSAWDWDGGFKGKSVISEFDLECSSSFLRSLPSST. A helical membrane pass occupies residues 125 to 145; the sequence is FYVGSIVGGVVLAMIPDGSLG. At 146 to 149 the chain is on the cytoplasmic side; sequence RKQL. The chain crosses the membrane as a helical span at residues 150 to 172; the sequence is LFFSSFAMSLTGISIFLSSNIWI. At 173–177 the chain is on the extracellular side; sequence YSFLK. The helical transmembrane segment at 178 to 195 threads the bilayer; sequence FVIGFARSQTGTYALVLI. ATP is bound at residue 195-202; sequence ISERISTK. At 196–208 the chain is on the cytoplasmic side; it reads SERISTKWRPRAT. A helical transmembrane segment spans residues 209–229; the sequence is MVPFTLFVLGFMSLSGIAYLV. Residues 230-235 lie on the Extracellular side of the membrane; sequence RHASWK. Residues 236–256 traverse the membrane as a helical segment; it reads VLYLCTSIPAGIHSIFIYFFA. Residues 257-320 lie on the Cytoplasmic side of the membrane; sequence LESPRWLHLE…LFIIKWAFRR (64 aa). A helical transmembrane segment spans residues 321-341; that stretch reads VTLVMIIMFGLGMSYYGVPLA. The Extracellular portion of the chain corresponds to 342–350; the sequence is VRDIKVNIY. A helical membrane pass occupies residues 351–371; it reads MSEALNAMVELPTFVVTPILL. At 372–379 the chain is on the cytoplasmic side; it reads EQFSRRSS. The helical transmembrane segment at 380–400 threads the bilayer; the sequence is VLVNCLIGGASGVLCFVMSLY. The Extracellular portion of the chain corresponds to 401 to 411; it reads GRTKIAFALEL. The chain crosses the membrane as a helical span at residues 412-432; it reads GSFFCARIGFNLMAIYLVELF. At 433-441 the chain is on the cytoplasmic side; that stretch reads PTCVRNSAT. A helical transmembrane segment spans residues 442–462; that stretch reads MMLRQALVVGGACCPLIASLG. At 463–467 the chain is on the extracellular side; the sequence is RNVPS. A helical transmembrane segment spans residues 468–488; sequence LSFAVFGFAMSGLGLFALLLP. Residues 489–515 lie on the Cytoplasmic side of the membrane; it reads ETKGLSLCDTMEEQEQRDQALKTSHSC.

It belongs to the major facilitator (TC 2.A.1) superfamily. Organic cation transporter (TC 2.A.1.19) family. In terms of tissue distribution, mostly expressed in leaves and siliques, and, to a lower extent, in roots, stems and flowers.

The protein resides in the vacuole membrane. In terms of biological role, high affinity carnitine transporter involved in the active cellular uptake of carnitine. Also transports organic cations. The sequence is that of Organic cation/carnitine transporter 5 (OCT5) from Arabidopsis thaliana (Mouse-ear cress).